Reading from the N-terminus, the 259-residue chain is Aliphatic sulfonates import ATP-binding protein SsuB 1 (259 aa).

Residues Val15–Leu229 enclose the ABC transporter domain. An ATP-binding site is contributed by Gly47–Thr54.

The protein belongs to the ABC transporter superfamily. Aliphatic sulfonates importer (TC 3.A.1.17.2) family. As to quaternary structure, the complex is composed of two ATP-binding proteins (SsuB), two transmembrane proteins (SsuC) and a solute-binding protein (SsuA).

Its subcellular location is the cell inner membrane. The enzyme catalyses ATP + H2O + aliphatic sulfonate-[sulfonate-binding protein]Side 1 = ADP + phosphate + aliphatic sulfonateSide 2 + [sulfonate-binding protein]Side 1.. In terms of biological role, part of the ABC transporter complex SsuABC involved in aliphatic sulfonates import. Responsible for energy coupling to the transport system. The polypeptide is Aliphatic sulfonates import ATP-binding protein SsuB 1 (Pseudomonas fluorescens (strain ATCC BAA-477 / NRRL B-23932 / Pf-5)).